A 306-amino-acid chain; its full sequence is Nucleotide-binding protein MUL_1815 (306 aa).

29 to 36 (GLSGAGRG) is a binding site for ATP. 80–83 (DVRS) is a GTP binding site.

This sequence belongs to the RapZ-like family.

Displays ATPase and GTPase activities. This chain is Nucleotide-binding protein MUL_1815, found in Mycobacterium ulcerans (strain Agy99).